Reading from the N-terminus, the 64-residue chain is DNA gyrase inhibitor YacG (64 aa).

4 residues coordinate Zn(2+): C9, C12, C28, and C32.

This sequence belongs to the DNA gyrase inhibitor YacG family. As to quaternary structure, interacts with GyrB. The cofactor is Zn(2+).

Inhibits all the catalytic activities of DNA gyrase by preventing its interaction with DNA. Acts by binding directly to the C-terminal domain of GyrB, which probably disrupts DNA binding by the gyrase. The sequence is that of DNA gyrase inhibitor YacG from Enterobacter sp. (strain 638).